The sequence spans 394 residues: Protein maelstrom (394 aa).

Residues 2-69 (APKKQNGFMM…ARRDKRGSLN (68 aa)) constitute a DNA-binding region (HMG box). The disordered stretch occupies residues 44–93 (TQQRGPYNSDAKDANAARRDKRGSLNGHGQVDKAQREAAESLMDKAQREA). Residues 73–93 (QVDKAQREAAESLMDKAQREA) show a composition bias toward basic and acidic residues.

Belongs to the maelstrom family.

The protein resides in the cytoplasm. The protein localises to the nucleus. Functionally, involved both in the piRNA and miRNA metabolic processes. As a component of the meiotic nuage, plays a central role during oogenesis by repressing transposable elements and preventing their mobilization, which is essential for the germline integrity. Repression of transposable elements is mediated via the piRNA metabolic process, which mediates the repression of transposable elements during meiosis by forming complexes composed of piRNAs and Piwi proteins and governs the repression of transposons. As a nuclear component, it is required for proper differentiation in the germline stem cell (GSC) lineage by repressing microRNA-7 (miR-7), thereby acting as an indirect regulator of bag-of-marbles (Bam). Acts by binding to the promoter of miR-7 gene and repressing its expression; miR-7 repression alleviates the Bam repression by miR-7, thereby allowing differentiation in the germline stem cell (GSC) lineage. This chain is Protein maelstrom (mael), found in Drosophila sechellia (Fruit fly).